The chain runs to 173 residues: NADH-quinone oxidoreductase subunit I 2 (173 aa).

2 consecutive 4Fe-4S ferredoxin-type domains span residues 41-73 and 83-112; these read IVLT…LAKA and EYFR…LTPD. Cys-53, Cys-56, Cys-59, Cys-63, Cys-92, Cys-95, Cys-98, and Cys-102 together coordinate [4Fe-4S] cluster. Residues 153–163 show a composition bias toward basic and acidic residues; it reads GKDKGEAEHEA. The segment at 153-173 is disordered; that stretch reads GKDKGEAEHEAPPVNLKGLLP.

The protein belongs to the complex I 23 kDa subunit family. NDH-1 is composed of 14 different subunits. Subunits NuoA, H, J, K, L, M, N constitute the membrane sector of the complex. [4Fe-4S] cluster is required as a cofactor.

It is found in the cell inner membrane. The enzyme catalyses a quinone + NADH + 5 H(+)(in) = a quinol + NAD(+) + 4 H(+)(out). NDH-1 shuttles electrons from NADH, via FMN and iron-sulfur (Fe-S) centers, to quinones in the respiratory chain. The immediate electron acceptor for the enzyme in this species is believed to be ubiquinone. Couples the redox reaction to proton translocation (for every two electrons transferred, four hydrogen ions are translocated across the cytoplasmic membrane), and thus conserves the redox energy in a proton gradient. This Rhodopseudomonas palustris (strain ATCC BAA-98 / CGA009) protein is NADH-quinone oxidoreductase subunit I 2.